We begin with the raw amino-acid sequence, 475 residues long: 3-isopropylmalate dehydratase large subunit (475 aa).

[4Fe-4S] cluster-binding residues include C349, C409, and C412.

This sequence belongs to the aconitase/IPM isomerase family. LeuC type 1 subfamily. As to quaternary structure, heterodimer of LeuC and LeuD. [4Fe-4S] cluster serves as cofactor.

The catalysed reaction is (2R,3S)-3-isopropylmalate = (2S)-2-isopropylmalate. It functions in the pathway amino-acid biosynthesis; L-leucine biosynthesis; L-leucine from 3-methyl-2-oxobutanoate: step 2/4. Its function is as follows. Catalyzes the isomerization between 2-isopropylmalate and 3-isopropylmalate, via the formation of 2-isopropylmaleate. The polypeptide is 3-isopropylmalate dehydratase large subunit (Cereibacter sphaeroides (strain KD131 / KCTC 12085) (Rhodobacter sphaeroides)).